Here is a 67-residue protein sequence, read N- to C-terminus: UPF0434 protein Lcho_2556 (67 aa).

Belongs to the UPF0434 family.

The polypeptide is UPF0434 protein Lcho_2556 (Leptothrix cholodnii (strain ATCC 51168 / LMG 8142 / SP-6) (Leptothrix discophora (strain SP-6))).